The following is a 273-amino-acid chain: Polyamine aminopropyltransferase (273 aa).

The PABS domain maps to 5 to 238 (ENWFSERYSD…GFWSFTIASE (234 aa)). S-methyl-5'-thioadenosine is bound at residue Q34. H65 and D90 together coordinate spermidine. S-methyl-5'-thioadenosine is bound by residues E109 and 140–141 (DG). Residue D158 is the Proton acceptor of the active site. Position 158–161 (158–161 (DSTD)) interacts with spermidine. P165 is an S-methyl-5'-thioadenosine binding site.

This sequence belongs to the spermidine/spermine synthase family. In terms of assembly, homodimer or homotetramer.

The protein localises to the cytoplasm. The enzyme catalyses S-adenosyl 3-(methylsulfanyl)propylamine + putrescine = S-methyl-5'-thioadenosine + spermidine + H(+). The protein operates within amine and polyamine biosynthesis; spermidine biosynthesis; spermidine from putrescine: step 1/1. Its function is as follows. Catalyzes the irreversible transfer of a propylamine group from the amino donor S-adenosylmethioninamine (decarboxy-AdoMet) to putrescine (1,4-diaminobutane) to yield spermidine. This chain is Polyamine aminopropyltransferase, found in Thermoplasma volcanium (strain ATCC 51530 / DSM 4299 / JCM 9571 / NBRC 15438 / GSS1).